The chain runs to 259 residues: Thiazole synthase (259 aa).

Lysine 98 acts as the Schiff-base intermediate with DXP in catalysis. 1-deoxy-D-xylulose 5-phosphate-binding positions include glycine 159, 185-186 (AG), and 207-208 (NS).

The protein belongs to the ThiG family. In terms of assembly, homotetramer. Forms heterodimers with either ThiH or ThiS.

The protein localises to the cytoplasm. The catalysed reaction is [ThiS sulfur-carrier protein]-C-terminal-Gly-aminoethanethioate + 2-iminoacetate + 1-deoxy-D-xylulose 5-phosphate = [ThiS sulfur-carrier protein]-C-terminal Gly-Gly + 2-[(2R,5Z)-2-carboxy-4-methylthiazol-5(2H)-ylidene]ethyl phosphate + 2 H2O + H(+). It participates in cofactor biosynthesis; thiamine diphosphate biosynthesis. Its function is as follows. Catalyzes the rearrangement of 1-deoxy-D-xylulose 5-phosphate (DXP) to produce the thiazole phosphate moiety of thiamine. Sulfur is provided by the thiocarboxylate moiety of the carrier protein ThiS. In vitro, sulfur can be provided by H(2)S. This Chlorobaculum tepidum (strain ATCC 49652 / DSM 12025 / NBRC 103806 / TLS) (Chlorobium tepidum) protein is Thiazole synthase.